Here is a 73-residue protein sequence, read N- to C-terminus: Large ribosomal subunit protein bL27c (73 aa).

This sequence belongs to the bacterial ribosomal protein bL27 family.

The protein resides in the plastid. Its subcellular location is the chloroplast. The sequence is that of Large ribosomal subunit protein bL27c (rpl27) from Haptolina hirta (Plankton alga).